A 1576-amino-acid polypeptide reads, in one-letter code: ABC transporter ALT5 (1576 aa).

Helical transmembrane passes span 27–47 (LKFE…ILAV), 72–92 (ILGF…TQGT), 99–119 (GLFL…VIVC), 267–287 (LPLS…PILP), 289–309 (LVLI…TGFL), 321–341 (GLIG…SLYW), 387–407 (VLAG…AVIV), 417–437 (GFFA…ATVG), 500–520 (ITAM…TLAA), and 525–545 (VATS…APLG). Residues 289 to 556 (LVLIGLSISQ…LFQSVAPLMS (268 aa)) enclose the ABC transmembrane type-1 1 domain. The region spanning 602 to 834 (FRVVNGSFRW…NGGYLQSLCV (233 aa)) is the ABC transporter 1 domain. Position 636-643 (636-643 (GPVGSGKS)) interacts with ATP. 7 helical membrane-spanning segments follow: residues 915–935 (VVAL…FAFP), 957–977 (FWVG…FLTM), 981–1001 (VTSI…AAIM), 1035–1054 (LIQF…VLAA), 1060–1078 (AAMY…KLYL), 1142–1162 (WLLF…VTLV), and 1171–1191 (GFAG…ASAM). An ABC transmembrane type-1 2 domain is found at 919–1199 (VAFLASAICY…AMQSYAKLET (281 aa)). Residues 1236–1567 (IKLDGVSASY…SHSKFRALCE (332 aa)) form the ABC transporter 2 domain. 1278–1285 (GRSGSGKS) contacts ATP.

Belongs to the ABC transporter superfamily. ABCC family. Conjugate transporter (TC 3.A.1.208) subfamily.

It is found in the cell membrane. Its function is as follows. ABC transporter that may provide the dual role AAL-toxin export and self-protection by allowing the fungus to evade the harmful effect of its own AAL-toxin production. The protein is ABC transporter ALT5 of Alternaria alternata (Alternaria rot fungus).